The chain runs to 317 residues: MSFSARSRRQRLQLEEAYQREMIFKMHTLDLVREGVNKRSPAFVRAFTSAKEASLDLDRYMQAHSRVGRVEQNARALAQRVEAQAAVGEILDRHRRFLHPDFIDNFDSREDSIVEREERLGDVLSDINCDGGGGEVGDPQEWLGHEDEALLMRWMLEEAPRVSTRIAADPHSPRSTCPAPRKAPEDARCGARKPGEVNNYTPSAQPRSQETTVDHLASPDEGTRLGDRTRDLEHHSTAPMRTHPNVLASERRRLGVVHQREKSSESQESATRSKAIVGQEDQKWLGGIPPLSDEELQVDMGIPTMNGPIYPDYHRTA.

The interval 166–291 (IAADPHSPRS…QKWLGGIPPL (126 aa)) is disordered. Residues 182-195 (KAPEDARCGARKPG) show a composition bias toward basic and acidic residues. The span at 198–211 (NNYTPSAQPRSQET) shows a compositional bias: polar residues. Basic and acidic residues-rich tracts occupy residues 217–236 (ASPDEGTRLGDRTRDLEHHS) and 249–265 (SERRRLGVVHQREKSSE).

Belongs to the alphaherpesvirinae HHV-1 UL14 protein family.

It localises to the virion tegument. Its subcellular location is the host cytoplasm. It is found in the host nucleus. Functionally, contributes to the nuclear transport of the viral transcriptional activator VP16 during the early phase of infection. Therefore, participates indirectly in the regulation of the immediate-early gene expression. Additionally, seems to be important for efficient nuclear targeting of capsids. The polypeptide is Tegument protein UL14 homolog (Equus caballus (Horse)).